A 174-amino-acid polypeptide reads, in one-letter code: Protein CURVATURE THYLAKOID 1B, chloroplastic (174 aa).

Residues 1–20 (MASLSVSSSSTIIDSRAPPS) form a disordered region. Residues 1–63 (MASLSVSSSS…RKIVRNVVTR (63 aa)) constitute a chloroplast transit peptide. Ala-64 carries the post-translational modification N-acetylalanine. The Stromal portion of the chain corresponds to 64–100 (ATTEVGEAPATTTEAETTELPEIVKTAQEAWEKVDDK). The helical transmembrane segment at 101–121 (YAIGSLAFAGVVALWGSAGMI) threads the bilayer. The Lumenal segment spans residues 122–126 (SAIDR). Residues 127–147 (LPLVPGVLELVGIGYTGWFTY) traverse the membrane as a helical segment. At 148 to 174 (KNLVFKPDREALFEKVKSTYKDILGSS) the chain is on the stromal side.

The protein belongs to the CURT family. As to quaternary structure, homo- and heterodimers and trimers. Interacts with PSAL. Phosphorylated on either Thr-65 or Thr-66 by a threonine specific thylakoid kinase.

Its subcellular location is the plastid. The protein localises to the chloroplast thylakoid membrane. In terms of biological role, determines thylakoid architecture by inducing membrane curvature. This Arabidopsis thaliana (Mouse-ear cress) protein is Protein CURVATURE THYLAKOID 1B, chloroplastic (CURT1B).